Reading from the N-terminus, the 881-residue chain is Tyrosine-protein kinase receptor TYRO3 (881 aa).

The N-terminal stretch at 1 to 28 (MVNPGPPGLIAGLLLAALSLSSVDGTKA) is a signal peptide. Ig-like C2-type domains follow at residues 29 to 114 (LGFV…KSVS) and 125 to 206 (PYFT…AIVE). At 29–414 (LGFVGHGYNM…QRHPHTRMSW (386 aa)) the chain is on the extracellular side. 2 N-linked (GlcNAc...) asparagine glycosylation sites follow: Asn37 and Asn49. The cysteines at positions 50 and 103 are disulfide-linked. The N-linked (GlcNAc...) asparagine glycan is linked to Asn143. Cys146 and Cys189 form a disulfide bridge. 2 consecutive Fibronectin type-III domains span residues 213 to 306 (PPFN…TKEK) and 311 to 401 (IPQN…SKEE). N-linked (GlcNAc...) asparagine glycosylation is found at Asn216, Asn279, Asn351, and Asn365. The chain crosses the membrane as a helical span at residues 415-435 (VPMVLGILTALVTVVAMTLIF). Residues 436–881 (LRKGRKETRF…MQEEQVVITL (446 aa)) are Cytoplasmic-facing. Residues 503-774 (FTLGRTLGKG…VDLKRRLEAI (272 aa)) form the Protein kinase domain. ATP contacts are provided by residues 509–517 (LGKGEFGSV) and Lys535. Asp640 functions as the Proton acceptor in the catalytic mechanism. A Phosphotyrosine; by autocatalysis modification is found at Tyr671. Residues 846-881 (EWSSSAQNGEARGLLHEEEEEEEEEEMQEEQVVITL) are disordered. Positions 862-874 (EEEEEEEEEEMQE) are enriched in acidic residues.

Belongs to the protein kinase superfamily. Tyr protein kinase family. AXL/UFO subfamily. Post-translationally, tyrosine phosphorylated upon receptor stimulation.

The protein resides in the cell membrane. The enzyme catalyses L-tyrosyl-[protein] + ATP = O-phospho-L-tyrosyl-[protein] + ADP + H(+). May be involved in cell adhesion processes, particularly in the central nervous system. The chain is Tyrosine-protein kinase receptor TYRO3 (tyro3) from Xenopus tropicalis (Western clawed frog).